A 226-amino-acid chain; its full sequence is EEF1A lysine methyltransferase 3 (226 aa).

S-adenosyl-L-methionine contacts are provided by residues W57, 83 to 85, D104, W133, and A150; that span reads GAG.

This sequence belongs to the methyltransferase superfamily. METTL21 family. Interacts with members of the heat shock protein 70 and 90 families and of the TCP-1 chaperonin family, as well as with HSPD1, STIP1 and tubulin; at least some of these proteins may be methylation substrates.

The protein localises to the cytoplasm. The protein resides in the cytoskeleton. Its subcellular location is the microtubule organizing center. It localises to the centrosome. The enzyme catalyses L-lysyl-[protein] + 3 S-adenosyl-L-methionine = N(6),N(6),N(6)-trimethyl-L-lysyl-[protein] + 3 S-adenosyl-L-homocysteine + 3 H(+). The catalysed reaction is L-lysyl-[protein] + S-adenosyl-L-methionine = N(6)-methyl-L-lysyl-[protein] + S-adenosyl-L-homocysteine + H(+). It carries out the reaction N(6)-methyl-L-lysyl-[protein] + S-adenosyl-L-methionine = N(6),N(6)-dimethyl-L-lysyl-[protein] + S-adenosyl-L-homocysteine + H(+). It catalyses the reaction N(6),N(6)-dimethyl-L-lysyl-[protein] + S-adenosyl-L-methionine = N(6),N(6),N(6)-trimethyl-L-lysyl-[protein] + S-adenosyl-L-homocysteine + H(+). Protein-lysine methyltransferase that selectively mono-, di- and trimethylates 'Lys-165' of the translation elongation factors EEF1A1 and EEF1A2 in an aminoacyl-tRNA and GTP-dependent manner. EEF1A1 methylation by EEF1AKMT3 is dynamic as well as inducible by stress conditions, such as ER-stress, and plays a regulatory role on mRNA translation. The chain is EEF1A lysine methyltransferase 3 from Homo sapiens (Human).